The following is a 243-amino-acid chain: Myelin protein P0 (243 aa).

Positions 1-26 (MESSGLRAPCSLLVLLSALVLPPTLA) are cleaved as a signal peptide. Residues 27–141 (IEVYTDREVY…VGKSSYVHLQ (115 aa)) form the Ig-like V-type domain. Topologically, residues 27 to 154 (IEVYTDREVY…KGAARAGLVL (128 aa)) are extracellular. Cysteine 47 and cysteine 123 form a disulfide bridge. Asparagine 118 carries N-linked (GlcNAc...) asparagine glycosylation. Residues 155–175 (GIIIAVALALVIVVTILILLI) traverse the membrane as a helical segment. Topologically, residues 176-243 (RYCWLRRQVR…GIGDSRKDRK (68 aa)) are cytoplasmic. Positions 201-243 (AKDSSKRSSRQTPILYAMLDQTRGKASEKKGKGGIGDSRKDRK) are disordered. Over residues 222–243 (TRGKASEKKGKGGIGDSRKDRK) the composition is skewed to basic and acidic residues.

It belongs to the myelin P0 protein family.

It is found in the cell membrane. In terms of biological role, creation of an extracellular membrane face which guides the wrapping process and ultimately compacts adjacent lamellae. The chain is Myelin protein P0 (mpz) from Xenopus tropicalis (Western clawed frog).